The primary structure comprises 101 residues: Small ribosomal subunit protein uS14 (101 aa).

This sequence belongs to the universal ribosomal protein uS14 family. Part of the 30S ribosomal subunit. Contacts proteins S3 and S10.

Functionally, binds 16S rRNA, required for the assembly of 30S particles and may also be responsible for determining the conformation of the 16S rRNA at the A site. In Chlamydia pneumoniae (Chlamydophila pneumoniae), this protein is Small ribosomal subunit protein uS14.